The sequence spans 464 residues: Keratin, type I cytoskeletal 28 (464 aa).

Residues 1–85 (MSLRFSSGSR…GSEGGLFSGN (85 aa)) are head. The coil 1A stretch occupies residues 86–121 (EKVTMQNLNDRLASYLDNVRALEEANAELERKIKSW). The IF rod domain occupies 86–401 (EKVTMQNLND…RLIDGDRNSC (316 aa)). The linker 1 stretch occupies residues 122–143 (YEKHGPGSCHGLDHDYSRYHLT). Positions 144-235 (IEDLKNKIIS…KNHEEEVKAL (92 aa)) are coil 1B. A linker 12 region spans residues 236–258 (QCVAGGNVNVEMNAAPGVDLTLL). The interval 259–397 (LNNMRAEYED…ETYCRLIDGD (139 aa)) is coil 2. A tail region spans residues 398 to 464 (RNSCSKSKGF…NGKTKQRVPF (67 aa)). The segment covering 402 to 417 (SKSKGFGSGSPGNSSK) has biased composition (low complexity). Disordered regions lie at residues 402–422 (SKSK…LSRT) and 440–464 (SSRV…RVPF).

The protein belongs to the intermediate filament family. Heterotetramer of two type I and two type II keratins.

The protein resides in the cytoplasm. Its function is as follows. Essential for the proper assembly of types I and II keratin protein complexes and the formation of keratin intermediate filaments in the inner root sheath (irs). The protein is Keratin, type I cytoskeletal 28 of Bos taurus (Bovine).